A 416-amino-acid polypeptide reads, in one-letter code: uncharacterized protein (416 aa).

The Zn(2+) site is built by H29, D31, E144, H215, and H236.

Belongs to the metallo-dependent hydrolases superfamily. Peptidase M19 family. Zn(2+) is required as a cofactor.

It catalyses the reaction an L-aminoacyl-L-amino acid + H2O = 2 an L-alpha-amino acid. This is an uncharacterized protein from Schizosaccharomyces pombe (strain 972 / ATCC 24843) (Fission yeast).